The primary structure comprises 475 residues: Ribulose bisphosphate carboxylase large chain (475 aa).

The propeptide occupies 1–2 (MS). Proline 3 is subject to N-acetylproline. Lysine 14 carries the N6,N6,N6-trimethyllysine modification. Residues asparagine 123 and threonine 173 each coordinate substrate. Lysine 175 (proton acceptor) is an active-site residue. A substrate-binding site is contributed by lysine 177. The Mg(2+) site is built by lysine 201, aspartate 203, and glutamate 204. Lysine 201 carries the post-translational modification N6-carboxylysine. Catalysis depends on histidine 294, which acts as the Proton acceptor. Substrate is bound by residues arginine 295, histidine 327, and serine 379.

Belongs to the RuBisCO large chain family. Type I subfamily. In terms of assembly, heterohexadecamer of 8 large chains and 8 small chains; disulfide-linked. The disulfide link is formed within the large subunit homodimers. The cofactor is Mg(2+). In terms of processing, the disulfide bond which can form in the large chain dimeric partners within the hexadecamer appears to be associated with oxidative stress and protein turnover.

It is found in the plastid. The protein resides in the chloroplast. It carries out the reaction 2 (2R)-3-phosphoglycerate + 2 H(+) = D-ribulose 1,5-bisphosphate + CO2 + H2O. The catalysed reaction is D-ribulose 1,5-bisphosphate + O2 = 2-phosphoglycolate + (2R)-3-phosphoglycerate + 2 H(+). Its function is as follows. RuBisCO catalyzes two reactions: the carboxylation of D-ribulose 1,5-bisphosphate, the primary event in carbon dioxide fixation, as well as the oxidative fragmentation of the pentose substrate in the photorespiration process. Both reactions occur simultaneously and in competition at the same active site. The polypeptide is Ribulose bisphosphate carboxylase large chain (Platanus occidentalis (Sycamore)).